The sequence spans 545 residues: Probable protein kinase UbiB (545 aa).

Residues 123–501 (DFEPIALASA…QIKQRQSQYL (379 aa)) form the Protein kinase domain. ATP contacts are provided by residues 129–137 (LASASIAQV) and Lys152. Asp287 acts as the Proton acceptor in catalysis. A helical membrane pass occupies residues 508-528 (LFLCGSLFLLSGLANIPWLFI).

This sequence belongs to the ABC1 family. UbiB subfamily.

The protein localises to the cell inner membrane. It functions in the pathway cofactor biosynthesis; ubiquinone biosynthesis [regulation]. In terms of biological role, is probably a protein kinase regulator of UbiI activity which is involved in aerobic coenzyme Q (ubiquinone) biosynthesis. The protein is Probable protein kinase UbiB of Photorhabdus laumondii subsp. laumondii (strain DSM 15139 / CIP 105565 / TT01) (Photorhabdus luminescens subsp. laumondii).